Consider the following 148-residue polypeptide: Deoxyuridine 5'-triphosphate nucleotidohydrolase (148 aa).

Substrate contacts are provided by residues 68–70 (RSG), N81, 85–87 (TID), and K95.

It belongs to the dUTPase family. Mg(2+) is required as a cofactor.

The enzyme catalyses dUTP + H2O = dUMP + diphosphate + H(+). The protein operates within pyrimidine metabolism; dUMP biosynthesis; dUMP from dCTP (dUTP route): step 2/2. Its function is as follows. This enzyme is involved in nucleotide metabolism: it produces dUMP, the immediate precursor of thymidine nucleotides and it decreases the intracellular concentration of dUTP so that uracil cannot be incorporated into DNA. The protein is Deoxyuridine 5'-triphosphate nucleotidohydrolase of Rickettsia felis (strain ATCC VR-1525 / URRWXCal2) (Rickettsia azadi).